We begin with the raw amino-acid sequence, 414 residues long: Enolase (414 aa).

Gln-162 provides a ligand contact to (2R)-2-phosphoglycerate. Glu-204 acts as the Proton donor in catalysis. The Mg(2+) site is built by Asp-239, Glu-280, and Asp-307. The (2R)-2-phosphoglycerate site is built by Lys-332, Arg-361, Ser-362, and Lys-383. Lys-332 serves as the catalytic Proton acceptor.

It belongs to the enolase family. The cofactor is Mg(2+).

Its subcellular location is the cytoplasm. It is found in the secreted. It localises to the cell surface. It catalyses the reaction (2R)-2-phosphoglycerate = phosphoenolpyruvate + H2O. The protein operates within carbohydrate degradation; glycolysis; pyruvate from D-glyceraldehyde 3-phosphate: step 4/5. In terms of biological role, catalyzes the reversible conversion of 2-phosphoglycerate (2-PG) into phosphoenolpyruvate (PEP). It is essential for the degradation of carbohydrates via glycolysis. The sequence is that of Enolase from Campylobacter jejuni subsp. jejuni serotype O:6 (strain 81116 / NCTC 11828).